The primary structure comprises 62 residues: Large ribosomal subunit protein bL28 (62 aa).

Belongs to the bacterial ribosomal protein bL28 family.

In Helicobacter hepaticus (strain ATCC 51449 / 3B1), this protein is Large ribosomal subunit protein bL28.